Reading from the N-terminus, the 740-residue chain is ATP-dependent DNA helicase Hel308 (740 aa).

Residues Q28 and 46-53 (IPTASGKT) each bind ATP. Positions 33 to 204 (RQGLLDGKNL…WMDAALVQSE (172 aa)) constitute a Helicase ATP-binding domain. A DEAH box motif is present at residues 149–152 (DEVH). The 201-residue stretch at 236–436 (EVNSLVADTL…EPAMRAHALS (201 aa)) folds into the Helicase C-terminal domain. The segment at 716 to 740 (VDHTPPETEEQPQVSGQSTLFSFDG) is disordered. The span at 726–740 (QPQVSGQSTLFSFDG) shows a compositional bias: polar residues.

This sequence belongs to the helicase family. Hel308 subfamily. In terms of assembly, monomer.

It carries out the reaction Couples ATP hydrolysis with the unwinding of duplex DNA by translocating in the 3'-5' direction.. The catalysed reaction is ATP + H2O = ADP + phosphate + H(+). Functionally, DNA-dependent ATPase and 3'-5' DNA helicase that may be involved in repair of stalled replication forks. The chain is ATP-dependent DNA helicase Hel308 from Methanocella arvoryzae (strain DSM 22066 / NBRC 105507 / MRE50).